A 1068-amino-acid polypeptide reads, in one-letter code: Carbamoyl phosphate synthase large chain (1068 aa).

Residues M1–E401 form a carboxyphosphate synthetic domain region. R129, R169, G175, G176, R208, I210, E215, G241, V242, H243, Q284, and E298 together coordinate ATP. The ATP-grasp 1 domain occupies K133 to L327. Mg(2+) is bound by residues Q284, E298, and N300. Positions 284, 298, and 300 each coordinate Mn(2+). The interval Q402–A546 is oligomerization domain. Residues A547–G930 are carbamoyl phosphate synthetic domain. The 191-residue stretch at D672–M862 folds into the ATP-grasp 2 domain. The ATP site is built by R708, K747, L749, E753, G778, V779, H780, S781, Q821, and E833. Mg(2+)-binding residues include Q821, E833, and N835. Residues Q821, E833, and N835 each contribute to the Mn(2+) site. The MGS-like domain occupies V931–L1068. Residues V931–L1068 form an allosteric domain region.

Belongs to the CarB family. In terms of assembly, composed of two chains; the small (or glutamine) chain promotes the hydrolysis of glutamine to ammonia, which is used by the large (or ammonia) chain to synthesize carbamoyl phosphate. Tetramer of heterodimers (alpha,beta)4. Mg(2+) is required as a cofactor. It depends on Mn(2+) as a cofactor.

The enzyme catalyses hydrogencarbonate + L-glutamine + 2 ATP + H2O = carbamoyl phosphate + L-glutamate + 2 ADP + phosphate + 2 H(+). It carries out the reaction hydrogencarbonate + NH4(+) + 2 ATP = carbamoyl phosphate + 2 ADP + phosphate + 2 H(+). It participates in amino-acid biosynthesis; L-arginine biosynthesis; carbamoyl phosphate from bicarbonate: step 1/1. It functions in the pathway pyrimidine metabolism; UMP biosynthesis via de novo pathway; (S)-dihydroorotate from bicarbonate: step 1/3. Large subunit of the glutamine-dependent carbamoyl phosphate synthetase (CPSase). CPSase catalyzes the formation of carbamoyl phosphate from the ammonia moiety of glutamine, carbonate, and phosphate donated by ATP, constituting the first step of 2 biosynthetic pathways, one leading to arginine and/or urea and the other to pyrimidine nucleotides. The large subunit (synthetase) binds the substrates ammonia (free or transferred from glutamine from the small subunit), hydrogencarbonate and ATP and carries out an ATP-coupled ligase reaction, activating hydrogencarbonate by forming carboxy phosphate which reacts with ammonia to form carbamoyl phosphate. The sequence is that of Carbamoyl phosphate synthase large chain from Agathobacter rectalis (strain ATCC 33656 / DSM 3377 / JCM 17463 / KCTC 5835 / VPI 0990) (Eubacterium rectale).